The chain runs to 1036 residues: Pre-mRNA-processing factor 39-2 (1036 aa).

Residues 1 to 24 are disordered; that stretch reads MVTTEVRTAVSDKEPLQRSPELDS. HAT repeat units follow at residues 62–94, 96–128, 131–166, 168–201, 278–310, and 312–344; these read DDIEKLCLVYDAFLLEFPLCHGYWRKYAYHKIK, CTLEDAVEVFERAVQAATYSVAVWLDYCAFAVA, EDPHDVSRLFERGLSFIGKDYSCCTLWDKYIEYLLG, QQWSSLANVYLRTLKYPSKKLDLYYKNFRKIAAS, CFETQIRRPYFHVKPLDTNQLDNWHAYLSFGET, and GDFDWAINLYERCLIPCANYTEFWFRYVDFVES. 3 disordered regions span residues 595 to 618, 714 to 767, and 995 to 1036; these read GISSIVDSPPKEKKESSLDSYGTQ, PSGS…PVGT, and KGDE…ISSI. A compositionally biased stretch (low complexity) spans 714 to 726; that stretch reads PSGSQSPQSYQSQ. Basic and acidic residues predominate over residues 740 to 755; sequence RDLNQMHRDSKPRSQE. The segment covering 1002 to 1036 has biased composition (polar residues); it reads SMPQGSTTNSDIQKSQESGAVNEANLSSDTSISSI.

The protein belongs to the PRP39 family.

The protein resides in the nucleus. Involved in pre-mRNA splicing. This chain is Pre-mRNA-processing factor 39-2, found in Arabidopsis thaliana (Mouse-ear cress).